Reading from the N-terminus, the 616-residue chain is Dihydroxy-acid dehydratase (616 aa).

Residue D81 participates in Mg(2+) binding. Position 122 (C122) interacts with [2Fe-2S] cluster. Positions 123 and 124 each coordinate Mg(2+). An N6-carboxylysine modification is found at K124. [2Fe-2S] cluster is bound at residue C195. E491 lines the Mg(2+) pocket. Residue S517 is the Proton acceptor of the active site.

This sequence belongs to the IlvD/Edd family. In terms of assembly, homodimer. The cofactor is [2Fe-2S] cluster. Requires Mg(2+) as cofactor.

The enzyme catalyses (2R)-2,3-dihydroxy-3-methylbutanoate = 3-methyl-2-oxobutanoate + H2O. The catalysed reaction is (2R,3R)-2,3-dihydroxy-3-methylpentanoate = (S)-3-methyl-2-oxopentanoate + H2O. It participates in amino-acid biosynthesis; L-isoleucine biosynthesis; L-isoleucine from 2-oxobutanoate: step 3/4. Its pathway is amino-acid biosynthesis; L-valine biosynthesis; L-valine from pyruvate: step 3/4. Functions in the biosynthesis of branched-chain amino acids. Catalyzes the dehydration of (2R,3R)-2,3-dihydroxy-3-methylpentanoate (2,3-dihydroxy-3-methylvalerate) into 2-oxo-3-methylpentanoate (2-oxo-3-methylvalerate) and of (2R)-2,3-dihydroxy-3-methylbutanoate (2,3-dihydroxyisovalerate) into 2-oxo-3-methylbutanoate (2-oxoisovalerate), the penultimate precursor to L-isoleucine and L-valine, respectively. The chain is Dihydroxy-acid dehydratase from Escherichia coli O9:H4 (strain HS).